The sequence spans 500 residues: NAD(P)H-quinone oxidoreductase subunit 2 A, chloroplastic (500 aa).

The next 13 membrane-spanning stretches (helical) occupy residues 14–34 (LLLF…GLIL), 47–67 (IPWF…ALLF), 89–109 (IFQF…VEYI), 114–134 (MAIT…MFLC), 139–159 (FITI…LSGY), 173–193 (YLLM…WLYG), 217–237 (PGIS…LSPA), 285–305 (WHLL…LIAI), 313–333 (MLAY…IVGD), 344–364 (YMLF…LFGL), 385–405 (ALSL…AGFF), 408–428 (LHLF…IGLL), and 474–494 (MIVC…IIAI).

The protein belongs to the complex I subunit 2 family. As to quaternary structure, NDH is composed of at least 16 different subunits, 5 of which are encoded in the nucleus.

The protein localises to the plastid. It is found in the chloroplast thylakoid membrane. It carries out the reaction a plastoquinone + NADH + (n+1) H(+)(in) = a plastoquinol + NAD(+) + n H(+)(out). The enzyme catalyses a plastoquinone + NADPH + (n+1) H(+)(in) = a plastoquinol + NADP(+) + n H(+)(out). Functionally, NDH shuttles electrons from NAD(P)H:plastoquinone, via FMN and iron-sulfur (Fe-S) centers, to quinones in the photosynthetic chain and possibly in a chloroplast respiratory chain. The immediate electron acceptor for the enzyme in this species is believed to be plastoquinone. Couples the redox reaction to proton translocation, and thus conserves the redox energy in a proton gradient. The polypeptide is NAD(P)H-quinone oxidoreductase subunit 2 A, chloroplastic (Pelargonium hortorum (Common geranium)).